Here is a 338-residue protein sequence, read N- to C-terminus: Nuclear hormone receptor family member nhr-108 (338 aa).

Residues 7 to 82 constitute a DNA-binding region (nuclear receptor); that stretch reads NQPCMVCGEI…IGMLEKVVAS (76 aa). The NR C4-type zinc-finger motif lies at 10–30; sequence CMVCGEISYSIRFGAVSCRAC. Residues 46-65 form an NR C4-type; degenerate zinc finger; that stretch reads KRCNGACDLGKYHRKTCQSC. The NR LBD domain occupies 92-338; it reads NNQTILSGLE…QCPLYEATNE (247 aa).

Belongs to the nuclear hormone receptor family.

It is found in the nucleus. Functionally, orphan nuclear receptor. This is Nuclear hormone receptor family member nhr-108 (nhr-108) from Caenorhabditis elegans.